Consider the following 298-residue polypeptide: Mitochondrial nicotinamide adenine dinucleotide transporter SLC25A51 (298 aa).

A compositionally biased stretch (basic and acidic residues) spans 1 to 11; sequence MMDSEAHEKRP. The disordered stretch occupies residues 1 to 21; the sequence is MMDSEAHEKRPPMLTSSNQDL. Solcar repeat units follow at residues 28-108, 117-201, and 214-297; these read VGDM…LSRL, PEFA…IKES, and NDFI…LLKI. A run of 6 helical transmembrane segments spans residues 36-56, 85-105, 119-139, 180-200, 216-236, and 269-290; these read CGYC…KILF, LPPL…YEDL, FATR…LTPF, ILFR…PIKE, FICG…INVV, and LFRG…INAT.

Belongs to the mitochondrial carrier (TC 2.A.29) family.

Its subcellular location is the mitochondrion inner membrane. The enzyme catalyses NAD(+)(in) = NAD(+)(out). Mitochondrial membrane carrier protein that mediates the import of NAD(+) into mitochondria. Mitochondrial NAD(+) is required for glycolysis and mitochondrial respiration. Compared to SLC25A52, SLC25A51-mediated transport is essential for the import of NAD(+) in mitochondria. The transport mechanism, uniport or antiport, its electrogenicity and substrate selectivity, remain to be elucidated. This chain is Mitochondrial nicotinamide adenine dinucleotide transporter SLC25A51, found in Mus musculus (Mouse).